The sequence spans 170 residues: Mitotic-spindle organizing protein 2B (170 aa).

2 disordered regions span residues 1–26 (MSRG…SPDA) and 102–170 (SADS…GSST). The span at 8–20 (GSQAMASSQAAGP) shows a compositional bias: low complexity. Over residues 123-132 (PNPTTSTTQG) the composition is skewed to polar residues. Over residues 151-170 (SGSRMQKSSSSGKSSGGSST) the composition is skewed to low complexity.

It belongs to the MOZART2 family. In terms of assembly, part of the gamma-tubulin complex. Interacts with TUBG1.

It is found in the cytoplasm. It localises to the cytoskeleton. The protein localises to the microtubule organizing center. The protein resides in the centrosome. Its subcellular location is the spindle. The protein is Mitotic-spindle organizing protein 2B (mzt2b) of Xenopus tropicalis (Western clawed frog).